We begin with the raw amino-acid sequence, 2093 residues long: MPLFMPDEELARLSSDAASVVAERADEYIRKIYAELDSVRAKADAASITAEQTCSLLEQKYLSLSQDFSSLESQNAKLQSDFDDRLAELAQSQAQKHQLHLQSIEKDGEVERMSTEMSELHKSKRQLMELLEQKDAEISEKNSTIKSYLDKIVKLTDTSSEKEARLAEATAELARSQAMCSRLSQEKELTERHAKWLDEELTAKVDSYAELRRRHSDLESEMSAKLVDVEKNYIECSSSLNWHKERLRELETKIGSLQEDLSSCKDAATTTEEQYTAELFTANKLVDLYKESSEEWSRKAGELEGVIKALEARLSQVESSYKERLDKEVSTKQLLEKENGDLKQKLEKCEAEIEKTRKTDELNLIPFSNFTRRVDNSGTSNMIEESQAVISKVPAGVSGTALAASLLRDGWSLAKIYEKYQEAVDAMRHEQLGRKEAEMILQRVLSELEEKAGFIQEERGEYERVVEAYCLVNQKLQDSVSEQSNMEKFIMELKADLRRRERENTLLQKDISDLQKQVTILLKECRDVQLRCGAARDDDEDDYPLLSDVEMEMESEADKIISEHLLKFKDINGLVEQNVKLRNLVRSLSEQIESRETELKETFEVDLKNKTDEASAKVATVLKRAEEQGQMIESLHTSVAMYKRLYEEEQKLHSSDSRSSDLSPAVVPGRKNFLHLLEDSEEATKRAQEKAFERIRILEEDFAKARSEVIAIRSERDKLAMEANFAREKLEGIMKESERKREEMNSVLARNIEFSQLIIDHQRKLRESSESLHAAEEISRKLSMEVSVLKQEKELLSNAEKRASDEVSALSQRVYRLQATLDTVQSTEEVREETRAAERRKQEEHIKQLQREWAEAKKELQEERSNARDFTSDRNQTLNNAVMQVEEMGKELANALKAVSVAESRASVAEARLSDLEKKIRSSDPKTLDMDSGGIVSLSDKEMSIELRTAKEEIEKLRGEVESSKSHMLQYKSIAQVNETALKQMESAHENFRLEAEKRQRSLEAELVSLRERVSELENDCIQKSEQLATAAAGKEDALLSASAEIASLREENLVKKSQIEAMNIQMSTLKNDLETEHEKWRVAQRNYERQVILLSETIQELTKTSQALAALQEEASELRKLADARGIENSELNAKWSEEKLMLEQQKNLAEKKYHELNEQNKLLHSRLEAKHLNSAEKNSRSGTISSGSTDSDHLEDSGLQRVVHYLRRTKEIAETEISLMRQEKLRLQSQLESALKMAESARGSLTAERASTRASLLTDDGIKSLQLQVSEMNLLRESNMQLREENKHNFEKCQEMREVAQKARMESENFENLLKTKQTELDLCMKEMEKLRMETDLHKKRVDELRETYRNIDIADYNRLKDEVRQLEEKLKAKDAHAEDCKKVLLEKQNKISLLEKELTNCKKDLSEREKRLDDAQQAQATMQSEFNKQKQELEKNKKIHYTLNMTKRKYEKEKDELSKQNQSLAKQLEEAKEEAGKRTTTDAVVEQSVKEREEKEKRIQILDKYVHQLKDEVRKKTEDLKKKDEELTKERSERKSVEKEVGDSLTKIKKEKTKVDEELAKLERYQTALTHLSEELEKLKHADGNLPEGTSAVQVLSGSILNDQAAAYVSAVEYFERVARSIASNSQVSTKPTDMVTEPSSGIPAAEPSTMTRVPSSTPLIKSPVATTQQLPKVASDNKEKRLISQKPSTEFRRPSGRRIVRPQLVKPEESPKVDVDMPEAEGTGDEGKQPAAHEPESQVTTSVRPVQTLVRKRQADSLVSEPQQDSLTQGETSSEIAPPASKKAKGSESHPDTSEGENLAKEPAIDELMDATTTTDGDNEETEAENAEEKTEEYVEAQQDNEADEPVEESPTETETIPTEEESRDQTEEENQEPLTDMESDKEEGELDLDTLEDLEEGTDVASMMRSPEKEEVQPETLATPTQSPSRMETAMEEAETTIETPVEDDKTDEGGDAAEEAADIPNNANDQQEAPETDIKPETSAATTSPVSTAPTTSSTLASAITSSGAPETEDPKRAPSPGGGSSTIVTLADRAQMKRRERIANIVVSRAPNPATRGARGRTVNLRGGGRLLPRGGRAPRGGRGQSPSPP.

Coiled coils occupy residues 57 to 362, 439 to 529, 570 to 627, and 688 to 1172; these read LEQK…TDEL, MILQ…RDVQ, DING…RAEE, and QEKA…LEAK. The tract at residues 1175–1198 is disordered; sequence NSAEKNSRSGTISSGSTDSDHLED. The span at 1182-1191 shows a compositional bias: low complexity; sequence RSGTISSGST. 2 coiled-coil regions span residues 1208-1252 and 1293-1585; these read LRRT…AERA and EKCQ…LKHA. 3 disordered regions span residues 1453–1489, 1525–1555, and 1627–2093; these read YEKEKDELSKQNQSLAKQLEEAKEEAGKRTTTDAVVE, KKDEELTKERSERKSVEKEVGDSLTKIKKEK, and SNSQ…PSPP. Residues 1470–1483 show a composition bias toward basic and acidic residues; that stretch reads QLEEAKEEAGKRTT. Residues 1652-1674 are compositionally biased toward polar residues; that stretch reads STMTRVPSSTPLIKSPVATTQQL. Basic and acidic residues-rich tracts occupy residues 1710-1719 and 1729-1740; these read KPEESPKVDV and DEGKQPAAHEPE. The segment covering 1764 to 1779 has biased composition (polar residues); sequence SEPQQDSLTQGETSSE. Positions 1789–1808 are enriched in basic and acidic residues; sequence KGSESHPDTSEGENLAKEPA. A coiled-coil region spans residues 1818 to 1849; sequence TTDGDNEETEAENAEEKTEEYVEAQQDNEADE. Acidic residues-rich tracts occupy residues 1821 to 1830 and 1838 to 1903; these read GDNEETEAEN and YVEA…EEGT. Residues 1921 to 1931 show a composition bias toward polar residues; that stretch reads TLATPTQSPSR. Positions 1935–1963 are enriched in acidic residues; the sequence is AMEEAETTIETPVEDDKTDEGGDAAEEAA. Positions 1984 to 2009 are enriched in low complexity; sequence TSAATTSPVSTAPTTSSTLASAITSS. The residue at position 2022 (Ser2022) is a Phosphoserine.

As to quaternary structure, part of the nuclear pore complex (NPC). The NPC has an eight-fold symmetrical structure comprising a central transport channel and two rings, the cytoplasmic and nuclear rings, to which eight filaments are attached. The cytoplasmic filaments have loose ends, while the nuclear filaments are joined in a distal ring, forming a nuclear basket. NPCs are highly dynamic in configuration and composition, and can be devided in 3 subcomplexes, the NUP62 subcomplex, the NUP107-160 subcomplex and the NUP93 subcomplex, containing approximately 30 different nucleoporin proteins. Interacts with MAD1 and (via N-terminus) with ESD4. Ubiquitous. Highest expression in the shoot apical region.

The protein localises to the nucleus envelope. Its subcellular location is the nucleus membrane. The protein resides in the nucleus. It localises to the nuclear pore complex. Its function is as follows. Component of the nuclear pore complex. Acts as a docking site for activities required for desumoylation and mRNA export. Required for the proper expression or localization of a subset of miRNAs. Plays a role in meristematic cell division by interacting with spindle assembly checkpoint proteins. The sequence is that of Nuclear-pore anchor from Arabidopsis thaliana (Mouse-ear cress).